We begin with the raw amino-acid sequence, 463 residues long: Endoglucanase EG-1 (463 aa).

Residues 1 to 22 form the signal peptide; the sequence is MAPSATLPLTTAILAIGRLVAA. The catalytic stretch occupies residues 23 to 397; sequence QQPGTSTPEV…DIGSTTNSTG (375 aa). Residues asparagine 78, asparagine 164, asparagine 204, and asparagine 208 are each glycosylated (N-linked (GlcNAc...) asparagine). The Nucleophile role is filled by glutamate 218. The Proton donor role is filled by glutamate 223. Positions 390–429 are disordered; that stretch reads GSTTNSTGGNPPPPPPPASSTTFSTTRRSSTTSSSPSCTQ. Residue asparagine 394 is glycosylated (N-linked (GlcNAc...) asparagine). Residues 402-427 form a linker region; it reads PPPPPASSTTFSTTRRSSTTSSSPSC. Low complexity predominate over residues 408–429; the sequence is SSTTFSTTRRSSTTSSSPSCTQ. One can recognise a CBM1 domain in the interval 427 to 463; that stretch reads CTQTHWGQCGGIGYTGCKTCTSGTTCQYGNDYYSQCL. 2 disulfide bridges follow: cysteine 435–cysteine 452 and cysteine 446–cysteine 462.

Belongs to the glycosyl hydrolase 7 (cellulase C) family.

It is found in the secreted. The catalysed reaction is Endohydrolysis of (1-&gt;4)-beta-D-glucosidic linkages in cellulose, lichenin and cereal beta-D-glucans.. Its function is as follows. The biological conversion of cellulose to glucose generally requires three types of hydrolytic enzymes: (1) Endoglucanases which cut internal beta-1,4-glucosidic bonds; (2) Exocellobiohydrolases that cut the disaccharide cellobiose from the non-reducing end of the cellulose polymer chain; (3) Beta-1,4-glucosidases which hydrolyze the cellobiose and other short cello-oligosaccharides to glucose. This Trichoderma longibrachiatum protein is Endoglucanase EG-1 (egl1).